The primary structure comprises 542 residues: CTP synthase (542 aa).

Residues 1 to 265 (MARYIFITGG…DDEVLAAFGL (265 aa)) are amidoligase domain. Ser13 provides a ligand contact to CTP. A UTP-binding site is contributed by Ser13. 14 to 19 (SLGKGL) contacts ATP. L-glutamine is bound at residue Tyr54. Residue Asp71 coordinates ATP. Residues Asp71 and Glu139 each contribute to the Mg(2+) site. Residues 146–148 (DIE), 186–191 (KTKPTQ), and Lys222 each bind CTP. UTP-binding positions include 186–191 (KTKPTQ) and Lys222. Residue 238–240 (RDA) participates in ATP binding. One can recognise a Glutamine amidotransferase type-1 domain in the interval 290-541 (TIAIVGKYTG…IQAAVVQSRL (252 aa)). Gly352 is an L-glutamine binding site. Cys379 (nucleophile; for glutamine hydrolysis) is an active-site residue. L-glutamine is bound by residues 380–383 (FGMQ), Glu403, and Arg469. Catalysis depends on residues His514 and Glu516.

The protein belongs to the CTP synthase family. As to quaternary structure, homotetramer.

It carries out the reaction UTP + L-glutamine + ATP + H2O = CTP + L-glutamate + ADP + phosphate + 2 H(+). The catalysed reaction is L-glutamine + H2O = L-glutamate + NH4(+). It catalyses the reaction UTP + NH4(+) + ATP = CTP + ADP + phosphate + 2 H(+). It participates in pyrimidine metabolism; CTP biosynthesis via de novo pathway; CTP from UDP: step 2/2. With respect to regulation, allosterically activated by GTP, when glutamine is the substrate; GTP has no effect on the reaction when ammonia is the substrate. The allosteric effector GTP functions by stabilizing the protein conformation that binds the tetrahedral intermediate(s) formed during glutamine hydrolysis. Inhibited by the product CTP, via allosteric rather than competitive inhibition. Functionally, catalyzes the ATP-dependent amination of UTP to CTP with either L-glutamine or ammonia as the source of nitrogen. Regulates intracellular CTP levels through interactions with the four ribonucleotide triphosphates. This is CTP synthase from Nitrobacter hamburgensis (strain DSM 10229 / NCIMB 13809 / X14).